Here is a 58-residue protein sequence, read N- to C-terminus: Leucine zipper protein 6 (58 aa).

In terms of tissue distribution, widely expressed, highest levels found in brain, placenta, spleen, testis, and ovary. Up-regulated in some tumor cells.

This is Leucine zipper protein 6 (LUZP6) from Homo sapiens (Human).